Here is a 466-residue protein sequence, read N- to C-terminus: MAIHLPCLPMMKILSYLDAYSLLQAAQVNKDWNELASSDVLWRKLCQKRWLYCDMDTLQLQGKETWKQFFIDRIWQERAKFRAKAKDFTYKEIPLMCGLFGYACYISGCGLTRKGQDKSVVCMVNSKNTISTWDVHKSVITWKSPEQPASIKLLTTLPEMHIAVTVDIQSTIKLWDCHNREALATNNLKSPCKSLKAVFTKDGPIVLIGDTLGNIHIFRIPDLYLISTVNVLPYGFDGIYCSPQKKWVLLSKKHPHILPKVFYMSSFLRTSEFSAPVSTVLKLSLYERVFWTPRREDRITLMSRSGFPQVKMFETYDIKLEEFGNKRIVKGKLIASFELQCHKVNPQRFGVSDKNVIVCSTESSLLLFDINGLRLKTFQYCPEMIVKLSVDPLHVIVICNTGSMDVYAWEERSLLLRKCYRLHIERPLPLYGFIYKAACDDVSIIQLITDELSLSSLTSYALNICS.

Positions 1–45 (MAIHLPCLPMMKILSYLDAYSLLQAAQVNKDWNELASSDVLWRKL) constitute an F-box domain. WD repeat units follow at residues 101-143 (GYAC…ITWK), 146-185 (EQPA…ALAT), 187-228 (NLKS…LIST), 339-379 (LQCH…KTFQ), and 381-419 (CPEM…LRKC).

In terms of assembly, part of an SCF (SKP1-CUL1-F-box protein) E3 ubiquitin-protein ligase complex. Interacts with KAT7 and SKP1. In terms of tissue distribution, specifically expressed in oocytes from follicles of the medullary region of the ovary.

The protein localises to the cytoplasm. Its subcellular location is the cytosol. The protein resides in the endoplasmic reticulum. It is found in the nucleus. The protein operates within protein modification; protein ubiquitination. Functionally, substrate-recognition component of an SCF (SKP1-CUL1-F-box protein)-type E3 ubiquitin ligase complex. Promotes KAT7 ubiquitination and subsequent degradation in collaboration with MAP2K1 kinase, leading to reduced histone H3K14 acetylation and increased cell proliferation. The sequence is that of F-box/WD repeat-containing protein 15 from Mus musculus (Mouse).